The sequence spans 119 residues: Beta-2-microglobulin (119 aa).

The N-terminal stretch at 1–20 (MARFVVVALLVLLSVSDLEA) is a signal peptide. The region spanning 25–114 (PKIQVYSRYP…VTFLTPKTVK (90 aa)) is the Ig-like C1-type domain. C45 and C100 are oxidised to a cystine.

It belongs to the beta-2-microglobulin family. As to quaternary structure, heterodimer of an alpha chain and a beta chain. Beta-2-microglobulin is the beta-chain of major histocompatibility complex class I molecules.

The protein localises to the secreted. Functionally, component of the class I major histocompatibility complex (MHC). Involved in the presentation of peptide antigens to the immune system. The chain is Beta-2-microglobulin (B2M) from Leontocebus fuscicollis (Brown-mantled tamarin).